The following is a 100-amino-acid chain: Putative pterin-4-alpha-carbinolamine dehydratase (100 aa).

Belongs to the pterin-4-alpha-carbinolamine dehydratase family.

The catalysed reaction is (4aS,6R)-4a-hydroxy-L-erythro-5,6,7,8-tetrahydrobiopterin = (6R)-L-erythro-6,7-dihydrobiopterin + H2O. The polypeptide is Putative pterin-4-alpha-carbinolamine dehydratase (Rhodopseudomonas palustris (strain ATCC BAA-98 / CGA009)).